The following is a 1040-amino-acid chain: Multidrug resistance protein MdtB (1040 aa).

12 helical membrane-spanning segments follow: residues 25–45 (LLMA…PVAA), 347–367 (LMLA…NIPA), 369–389 (IIPG…MVFL), 396–416 (LTLM…IVVI), 440–460 (IGFT…PLLF), 472–492 (FAVT…TLTP), 537–557 (WLTL…WIVI), 863–883 (LGST…VLGV), 888–908 (FIHP…ALLA), 910–930 (IIAG…LIGI), 968–988 (ILMT…STGV), and 998–1018 (IAMV…TPVI).

The protein belongs to the resistance-nodulation-cell division (RND) (TC 2.A.6) family. MdtB subfamily. Part of a tripartite efflux system composed of MdtA, MdtB and MdtC. MdtB forms a heteromultimer with MdtC.

It is found in the cell inner membrane. This chain is Multidrug resistance protein MdtB, found in Salmonella newport (strain SL254).